The sequence spans 62 residues: MTTAFQFALFALIATSFLLVVGVPVAFASPGGWSDNKNIVFSGASLWIGLVFLVGIPNSFIS.

The next 2 membrane-spanning stretches (helical) occupy residues 8–28 (ALFA…VAFA) and 41–61 (FSGA…NSFI).

This sequence belongs to the PsbZ family. PSII is composed of 1 copy each of membrane proteins PsbA, PsbB, PsbC, PsbD, PsbE, PsbF, PsbH, PsbI, PsbJ, PsbK, PsbL, PsbM, PsbT, PsbY, PsbZ, Psb30/Ycf12, at least 3 peripheral proteins of the oxygen-evolving complex and a large number of cofactors. It forms dimeric complexes.

The protein localises to the plastid. It localises to the chloroplast thylakoid membrane. In terms of biological role, may control the interaction of photosystem II (PSII) cores with the light-harvesting antenna, regulates electron flow through the 2 photosystem reaction centers. PSII is a light-driven water plastoquinone oxidoreductase, using light energy to abstract electrons from H(2)O, generating a proton gradient subsequently used for ATP formation. The chain is Photosystem II reaction center protein Z from Adiantum capillus-veneris (Maidenhair fern).